A 205-amino-acid polypeptide reads, in one-letter code: LexA repressor (205 aa).

Positions 28 to 48 (RAEIAHKLGFRSANSAEEHLK) form a DNA-binding region, H-T-H motif. Catalysis depends on for autocatalytic cleavage activity residues Ser122 and Lys159.

It belongs to the peptidase S24 family. Homodimer.

The enzyme catalyses Hydrolysis of Ala-|-Gly bond in repressor LexA.. Represses a number of genes involved in the response to DNA damage (SOS response), including recA and lexA. In the presence of single-stranded DNA, RecA interacts with LexA causing an autocatalytic cleavage which disrupts the DNA-binding part of LexA, leading to derepression of the SOS regulon and eventually DNA repair. This chain is LexA repressor, found in Idiomarina loihiensis (strain ATCC BAA-735 / DSM 15497 / L2-TR).